A 367-amino-acid polypeptide reads, in one-letter code: Putative F-box protein At4g10190 (367 aa).

Residues 3–53 (KRNIVDLPEDLVMEILARVPTVTLVRLQSTSKRWNVLIEDKRFAEQHFTNA) enclose the F-box domain.

This is Putative F-box protein At4g10190 from Arabidopsis thaliana (Mouse-ear cress).